Consider the following 315-residue polypeptide: Shiga toxin subunit A (315 aa).

The signal sequence occupies residues methionine 1 to alanine 22. The A1 stretch occupies residues lysine 23–arginine 273. Glutamate 189 is a catalytic residue. The cysteines at positions 264 and 283 are disulfide-linked. The segment at methionine 274–serine 315 is A2.

Belongs to the ribosome-inactivating protein family. Shiga toxin contains a single subunit A and five copies of subunit B.

The enzyme catalyses Endohydrolysis of the N-glycosidic bond at one specific adenosine on the 28S rRNA.. The A subunit is responsible for inhibiting protein synthesis through the catalytic inactivation of 60S ribosomal subunits. After endocytosis, the A subunit is cleaved by furin in two fragments, A1 and A2: A1 is the catalytically active fragment, and A2 is essential for holotoxin assembly with the B subunits. In Shigella sonnei (Shigella sonnei bacteriophage 7888), this protein is Shiga toxin subunit A (stxA).